The following is a 392-amino-acid chain: Small ribosomal subunit protein bS1 (392 aa).

S1 motif domains are found at residues G16–R90, D108–K173, G194–K262, and D279–K348.

Belongs to the bacterial ribosomal protein bS1 family.

Its function is as follows. Binds mRNA; thus facilitating recognition of the initiation point. It is needed to translate mRNA with a short Shine-Dalgarno (SD) purine-rich sequence. The chain is Small ribosomal subunit protein bS1 (rpsA) from Staphylococcus haemolyticus (strain JCSC1435).